We begin with the raw amino-acid sequence, 272 residues long: 4-hydroxy-tetrahydrodipicolinate reductase (272 aa).

Residues 10–15 (GAGGRM), E36, 100–102 (GTT), and 124–127 (SGNM) contribute to the NAD(+) site. H157 acts as the Proton donor/acceptor in catalysis. H158 is a binding site for (S)-2,3,4,5-tetrahydrodipicolinate. The active-site Proton donor is K161. 167-168 (GT) serves as a coordination point for (S)-2,3,4,5-tetrahydrodipicolinate.

This sequence belongs to the DapB family.

It localises to the cytoplasm. It carries out the reaction (S)-2,3,4,5-tetrahydrodipicolinate + NAD(+) + H2O = (2S,4S)-4-hydroxy-2,3,4,5-tetrahydrodipicolinate + NADH + H(+). The enzyme catalyses (S)-2,3,4,5-tetrahydrodipicolinate + NADP(+) + H2O = (2S,4S)-4-hydroxy-2,3,4,5-tetrahydrodipicolinate + NADPH + H(+). It functions in the pathway amino-acid biosynthesis; L-lysine biosynthesis via DAP pathway; (S)-tetrahydrodipicolinate from L-aspartate: step 4/4. In terms of biological role, catalyzes the conversion of 4-hydroxy-tetrahydrodipicolinate (HTPA) to tetrahydrodipicolinate. In Afipia carboxidovorans (strain ATCC 49405 / DSM 1227 / KCTC 32145 / OM5) (Oligotropha carboxidovorans), this protein is 4-hydroxy-tetrahydrodipicolinate reductase.